A 217-amino-acid chain; its full sequence is Protein MODIFYING WALL LIGNIN-2 (217 aa).

The first 23 residues, 1 to 23, serve as a signal peptide directing secretion; the sequence is MHNLFLYSVVFSLGLVSFITCFA. The Cytoplasmic portion of the chain corresponds to 24–51; that stretch reads AEFKRTQKEDIRWDTERNCYVPGSHAFG. The helical transmembrane segment at 52 to 72 threads the bilayer; it reads LGSAAVLCFCLAQIVGNIVVF. At 73–94 the chain is on the extracellular side; the sequence is RNHRTRTKREDGYKITDLTLPT. A helical membrane pass occupies residues 95–115; it reads VLLLLSWSNFVVVVLILSTAI. Residues 116-137 are Cytoplasmic-facing; sequence SMSRAQAYGEGWLDEDCYLVKD. Residues 138 to 158 traverse the membrane as a helical segment; the sequence is GVFAASGCLAILGLGALTISA. Over 159 to 217 the chain is Extracellular; sequence TRIKVKKQQQLVQVVIKDQNQDQRRSMEEEQKHDEHQTNKSESVIHLVEEVSSTNISRI. N-linked (GlcNAc...) asparagine glycans are attached at residues Asn197 and Asn213.

The protein belongs to the DESIGUAL family.

The protein localises to the cell membrane. Together with MWL1, contributes to secondary cell wall biology, specifically lignin biosynthesis. This Arabidopsis thaliana (Mouse-ear cress) protein is Protein MODIFYING WALL LIGNIN-2.